Here is a 313-residue protein sequence, read N- to C-terminus: MNELPGSYKLKIKKAATGSIQFSRYLLTRMTHDRVNVNAGYLAYITLLSIVPMLTVLLSILSSFSVFADVGLVIQNFVITNFVPASGDAVHGALLEFVANTGKMTAVGSVFLFIAALMLISNIDKNLNYIWRVTEKRRAVLSFSMYWMVLTLGPILIGASIAATSYVTSLNLLQNEVVSSAFNTVIRKLPLITSFFAFFGLYLLVPNKKIHFSHAAAGSLVAALLFELSKKGFAAYITQFPSYQLIYGALAAIPILFVWVYLCWLIVLVGAEVTAALGEQEQWSDSQEMVHSSDKDKITEQGNNSDSTDPESK.

The next 6 helical transmembrane spans lie at 41–61, 104–124, 139–159, 185–205, 217–237, and 249–269; these read YLAY…LSIL, MTAV…SNID, AVLS…LIGA, VIRK…YLLV, AGSL…AAYI, and ALAA…IVLV. Polar residues predominate over residues 281 to 290; sequence EQWSDSQEMV. The segment at 281 to 313 is disordered; sequence EQWSDSQEMVHSSDKDKITEQGNNSDSTDPESK.

The protein belongs to the UPF0761 family.

The protein localises to the cell inner membrane. The polypeptide is UPF0761 membrane protein VS_0126 (Vibrio atlanticus (strain LGP32) (Vibrio splendidus (strain Mel32))).